A 97-amino-acid chain; its full sequence is Defensin-like protein 245 (97 aa).

The first 24 residues, 1–24 (MKFAAILLVTCVLFSLLPSHLSQG), serve as a signal peptide directing secretion. Disulfide bonds link C39-C96, C50-C79, C58-C89, and C77-C91.

The protein belongs to the DEFL family. As to expression, flower buds and roots.

Its subcellular location is the secreted. The chain is Defensin-like protein 245 (SCRL4) from Arabidopsis thaliana (Mouse-ear cress).